The chain runs to 459 residues: Bifunctional protein GlmU (459 aa).

The pyrophosphorylase stretch occupies residues 1–230; it reads MSNRFAVILA…FDETLGVNDR (230 aa). UDP-N-acetyl-alpha-D-glucosamine-binding positions include 9 to 12, Lys-23, Gln-73, and 78 to 79; these read LAAG and GT. Mg(2+) is bound at residue Asp-103. UDP-N-acetyl-alpha-D-glucosamine-binding residues include Gly-140, Glu-155, Asn-170, and Asn-228. A Mg(2+)-binding site is contributed by Asn-228. The tract at residues 231–251 is linker; that stretch reads VALSQAEIIMKNRINRKNMVN. Residues 252 to 459 form an N-acetyltransferase region; it reads GVTIIDPSNT…VDQLLNKKKS (208 aa). Arg-333 and Lys-351 together coordinate UDP-N-acetyl-alpha-D-glucosamine. The active-site Proton acceptor is His-363. UDP-N-acetyl-alpha-D-glucosamine contacts are provided by Tyr-366 and Asn-377. Acetyl-CoA is bound by residues 386-387, Ala-423, and Arg-440; that span reads NY.

It in the N-terminal section; belongs to the N-acetylglucosamine-1-phosphate uridyltransferase family. This sequence in the C-terminal section; belongs to the transferase hexapeptide repeat family. Homotrimer. Mg(2+) is required as a cofactor.

Its subcellular location is the cytoplasm. It catalyses the reaction alpha-D-glucosamine 1-phosphate + acetyl-CoA = N-acetyl-alpha-D-glucosamine 1-phosphate + CoA + H(+). It carries out the reaction N-acetyl-alpha-D-glucosamine 1-phosphate + UTP + H(+) = UDP-N-acetyl-alpha-D-glucosamine + diphosphate. Its pathway is nucleotide-sugar biosynthesis; UDP-N-acetyl-alpha-D-glucosamine biosynthesis; N-acetyl-alpha-D-glucosamine 1-phosphate from alpha-D-glucosamine 6-phosphate (route II): step 2/2. It participates in nucleotide-sugar biosynthesis; UDP-N-acetyl-alpha-D-glucosamine biosynthesis; UDP-N-acetyl-alpha-D-glucosamine from N-acetyl-alpha-D-glucosamine 1-phosphate: step 1/1. It functions in the pathway bacterial outer membrane biogenesis; LPS lipid A biosynthesis. Catalyzes the last two sequential reactions in the de novo biosynthetic pathway for UDP-N-acetylglucosamine (UDP-GlcNAc). The C-terminal domain catalyzes the transfer of acetyl group from acetyl coenzyme A to glucosamine-1-phosphate (GlcN-1-P) to produce N-acetylglucosamine-1-phosphate (GlcNAc-1-P), which is converted into UDP-GlcNAc by the transfer of uridine 5-monophosphate (from uridine 5-triphosphate), a reaction catalyzed by the N-terminal domain. This Bacillus anthracis (strain A0248) protein is Bifunctional protein GlmU.